Reading from the N-terminus, the 256-residue chain is MSNFDNFNTDFYQTSYSIDDQSQGYNYNAGGAQYSKQYPYDPYSQQGGFILQEMNQQQQPYTGQIYQPTQTYTPTATESVYGSTFDDEPPLLEELGINFDHIWQKTLTVLHPLKVADGSIMNETDLAGPMVFCLAFGATLLLAGKIQFGYVYGISAMGCLGMYCLLNLMSMTGVSFGCVSSVLGYCLLPMIILSTFAVIFSLQGILGIVLAALIIGWCSFSASKIFISALAMDGQQLLVAYPCALLYGVFALISVF.

Over 1 to 125 (MSNFDNFNTD…ADGSIMNETD (125 aa)) the chain is Cytoplasmic. A helical transmembrane segment spans residues 126–146 (LAGPMVFCLAFGATLLLAGKI). Gln147 is a topological domain (lumenal). The helical transmembrane segment at 148–168 (FGYVYGISAMGCLGMYCLLNL) threads the bilayer. The Cytoplasmic portion of the chain corresponds to 169-172 (MSMT). The helical transmembrane segment at 173–193 (GVSFGCVSSVLGYCLLPMIIL) threads the bilayer. Residues 194–195 (ST) lie on the Lumenal side of the membrane. A helical membrane pass occupies residues 196–216 (FAVIFSLQGILGIVLAALIIG). At 217–235 (WCSFSASKIFISALAMDGQ) the chain is on the cytoplasmic side. The chain crosses the membrane as a helical span at residues 236-256 (QLLVAYPCALLYGVFALISVF).

Belongs to the YIP1 family.

The protein resides in the endoplasmic reticulum membrane. The protein localises to the golgi apparatus. It localises to the cis-Golgi network membrane. Its function is as follows. Plays a role in transport between endoplasmic reticulum and Golgi. This is Protein YIPF5 (yipf5) from Xenopus laevis (African clawed frog).